Here is a 429-residue protein sequence, read N- to C-terminus: 4-hydroxybutyrate coenzyme A transferase (429 aa).

215-219 contacts CoA; it reads GIGAI. Residue glutamate 238 is the 5-glutamyl coenzyme A thioester intermediate of the active site. CoA is bound at residue glycine 336.

Belongs to the acetyl-CoA hydrolase/transferase family.

The chain is 4-hydroxybutyrate coenzyme A transferase (cat2) from Clostridium kluyveri (strain ATCC 8527 / DSM 555 / NBRC 12016 / NCIMB 10680 / K1).